A 240-amino-acid chain; its full sequence is Thymidylate kinase (240 aa).

Position 10-17 (10-17 (GINGVGKS)) interacts with ATP.

This sequence belongs to the thymidylate kinase family.

The enzyme catalyses dTMP + ATP = dTDP + ADP. It functions in the pathway pyrimidine metabolism; dTTP biosynthesis. Its function is as follows. Catalyzes the conversion of dTMP to dTDP. The protein is Thymidylate kinase (TMK) of African swine fever virus (strain Badajoz 1971 Vero-adapted) (Ba71V).